Here is a 1403-residue protein sequence, read N- to C-terminus: MAHYSKVDLDEEFERFMKELSDDSFENSNETPSQPNKDRKKKDTAPWWIAEDGFEDDGLLGTNVSYLKTKKTYQPITDMEEENEKVQFLKSSGTSVLSVDSLEANELVASELHHSTLGLGLDTLEEQEEKEQFFARLEKGLTSSIDYSKLNQELDSDDSAQFRVLHRYQGNVEPAEGGRENESEHKELPETYSDDFEDAEDTDEPLITKDEETRPKENPESGKGSFPNQEEEKTGMLANVVLLDSFDSVEDVDLNNHERPTPKAKALPEMAGGELAETGVSYGQSSGDTEALHQAYHHVAHSLGDTGEPRIEASPGHSVRSSAKDGLQENEESSKNISTTESDLPTVEELMKPIRIDSYGIRGFDLQPVSLQKAVGSKEAESVSSLPLTVNTNTMSQDTRHVSPFPHEQDESVVLHRTAGEGVGSSCPATEEHLDKMYLEILRKKTSVNPSLLPQDNKANQTSRSRLSAREEAPVTSKQVPCKKARSAPPLPRRKPQSGLYASARSSGYSKPSSPLQFFSALEKKTSKDNTKTKNVRPIPTSNQFRKREILSGTKLIKPAALNKPSPHREGSPATPKRPEDPSDDSFVQLQTETLGSYGGNREKELLMLKRAQDAEEKWRGAQALIEQIKMTFSEKEKELENTVESLKRQQERELFKLNQENYILQAKLSSFEETSRKQRWLQFGETSDPLTEEKLKQIQKEIQEQETLLQGYQQENERLYSQVKDLQEQNKKNEERMFKENQNLFSELASLKEQMHKNHFLPQAVENIEPTKNQSFTDLLAELRAAQKEKNHLMEDIKRLKQDKQALEVDLERVKRERDQAKDQIAYTTGEKLYEIKILEETHKQEVSRLQKRLQWYAENQELLDKDAARLREANEETERLKLEIEKLKTESGSPANQQRLRSKERALDAKRIQDLERQVKEMEGILKRRYPNSLPALILAASAAGDSVDRNTVDFMERRIKKLEADLEGKDEEAKKSLRTMEQQFQKMKIQYEQRLEEQEQMLAHRQREAPQNQHNSSSRLKALETELGGIKEAHQITVRKLEAEIDVLKHQNAHLEHKKNDKEDQDLQSIEFQVEQAQARAKLARLNEELAAKGREIQDLTKTVERLQKERRMMLSRQSPRGREEMAAKRLKKEILHPNSGNANAFSETLGAKLYHPHTFTDSHISEVLEENYRLRSELEGLTLEREKLKMESEAAVCQLESSMKRVKDDAAAHIASLKAAHEREIEKLLCQNAVENSSSRVAELNRKIATQEVLLKHFQGQVNELQGKQESLSLSQVREEILQKQITKLLEELKEAKENHTPEMKHFMGLERKIKQMEMRHKQREQELQQIIQQTRQVVETEQNKEVEKWKRLAQLKNRELDKFRTELDSILDVLRELHRQGVVVPVALADEESTAKEF.

The segment at 19 to 44 (ELSDDSFENSNETPSQPNKDRKKKDT) is disordered. Residues 26–35 (ENSNETPSQP) show a composition bias toward polar residues. Residues serine 156 and serine 159 each carry the phosphoserine modification. 3 disordered regions span residues 171 to 235 (NVEP…EKTG), 305 to 342 (DTGEPRIEASPGHSVRSSAKDGLQENEESSKNISTTES), and 449 to 586 (NPSL…SDDS). Residues 176–189 (EGGRENESEHKELP) are compositionally biased toward basic and acidic residues. Over residues 192-204 (YSDDFEDAEDTDE) the composition is skewed to acidic residues. The span at 206 to 220 (LITKDEETRPKENPE) shows a compositional bias: basic and acidic residues. Residues 449-466 (NPSLLPQDNKANQTSRSR) show a composition bias toward polar residues. Phosphoserine is present on serine 468. A compositionally biased stretch (basic residues) spans 481 to 496 (PCKKARSAPPLPRRKP). Residues 504–517 (ARSSGYSKPSSPLQ) are compositionally biased toward polar residues. Composition is skewed to basic and acidic residues over residues 522-532 (LEKKTSKDNTK) and 567-581 (PHREGSPATPKRPED). Coiled-coil stretches lie at residues 610 to 1120 (KRAQ…MLSR), 1170 to 1205 (EVLEENYRLRSELEGLTLEREKLKMESEAAVCQLES), and 1234 to 1385 (CQNA…LHRQ).

It belongs to the CEP162 family. As to quaternary structure, interacts with alpha-tubulin. Interacts with CPNE4. Interacts with CEP290.

It is found in the cytoplasm. Its subcellular location is the cytoskeleton. The protein localises to the microtubule organizing center. It localises to the centrosome. The protein resides in the centriole. It is found in the spindle. Its subcellular location is the nucleus. Functionally, required to promote assembly of the transition zone in primary cilia. Acts by specifically recognizing and binding the axonemal microtubule. Localizes to the distal ends of centrioles before ciliogenesis and directly binds to axonemal microtubule, thereby promoting and restricting transition zone formation specifically at the cilia base. Required to mediate CEP290 association with microtubules. The sequence is that of Centrosomal protein of 162 kDa (Cep162) from Rattus norvegicus (Rat).